The primary structure comprises 142 residues: Transcriptional regulator MraZ (142 aa).

2 SpoVT-AbrB domains span residues 5-47 (EYPY…PLPG) and 76-119 (ASKA…NPQR).

The protein belongs to the MraZ family. Forms oligomers.

It localises to the cytoplasm. It is found in the nucleoid. The chain is Transcriptional regulator MraZ from Deinococcus radiodurans (strain ATCC 13939 / DSM 20539 / JCM 16871 / CCUG 27074 / LMG 4051 / NBRC 15346 / NCIMB 9279 / VKM B-1422 / R1).